Here is a 43-residue protein sequence, read N- to C-terminus: SPbeta prophage-derived uncharacterized protein YotD (43 aa).

This is SPbeta prophage-derived uncharacterized protein YotD (yotD) from Bacillus subtilis (strain 168).